A 128-amino-acid chain; its full sequence is Probable 4-amino-4-deoxy-L-arabinose-phosphoundecaprenol flippase subunit ArnF (128 aa).

At 1–2 the chain is on the cytoplasmic side; that stretch reads MG. A helical membrane pass occupies residues 3–23; the sequence is LMWGLFSVIIASVAQLSLGFA. Residues 24–35 are Periplasmic-facing; that stretch reads ASHLPPMTHLWD. A helical membrane pass occupies residues 36–56; it reads FIAALLAFGLDARILLLGLLG. The Cytoplasmic segment spans residues 57–76; it reads YLLSVFCWYKTLHKLALSKA. Residues 77-97 traverse the membrane as a helical segment; that stretch reads YALLSMSYVLVWIASMVLPGW. The Periplasmic segment spans residues 98-100; sequence EGT. The helical transmembrane segment at 101–121 threads the bilayer; sequence FSLKALLGVACIMSGLMLIFL. The Cytoplasmic portion of the chain corresponds to 122 to 128; that stretch reads PTTKQRY.

The protein belongs to the ArnF family. Heterodimer of ArnE and ArnF.

It is found in the cell inner membrane. Its pathway is bacterial outer membrane biogenesis; lipopolysaccharide biosynthesis. In terms of biological role, translocates 4-amino-4-deoxy-L-arabinose-phosphoundecaprenol (alpha-L-Ara4N-phosphoundecaprenol) from the cytoplasmic to the periplasmic side of the inner membrane. The polypeptide is Probable 4-amino-4-deoxy-L-arabinose-phosphoundecaprenol flippase subunit ArnF (Shigella sonnei (strain Ss046)).